Reading from the N-terminus, the 352-residue chain is Decapping nuclease din1 (352 aa).

Residues Arg-33 and 93–95 (WRG) each bind substrate. Glu-150 contributes to the a divalent metal cation binding site. Substrate-binding residues include Cys-182 and Glu-199. An a divalent metal cation-binding site is contributed by Asp-201. Ser-218 carries the phosphoserine modification. Positions 239 and 240 each coordinate a divalent metal cation. Positions 241 and 263 each coordinate substrate.

The protein belongs to the DXO/Dom3Z family. In terms of assembly, interacts with dhp1/Rat1; the interaction is direct, stabilizes dhp1 protein structure and stimulates its exoribonuclease activity. The interaction also stimulates din1 pyrophosphohydrolase activity, probably by recruiting it to mRNA substrates. A divalent metal cation serves as cofactor.

Its subcellular location is the nucleus. The catalysed reaction is a 5'-end NAD(+)-phospho-ribonucleoside in mRNA + H2O = a 5'-end phospho-ribonucleoside in mRNA + NAD(+) + H(+). The enzyme catalyses a 5'-end (N(7)-methyl 5'-triphosphoguanosine)-ribonucleoside-ribonucleotide in mRNA + H2O = a (N(7)-methyl 5'-triphosphoguanosine)-nucleoside + a 5'-end phospho-ribonucleoside in mRNA + H(+). It carries out the reaction a 5'-end triphospho-ribonucleoside in mRNA + H2O = a 5'-end phospho-ribonucleoside in mRNA + diphosphate + H(+). Functionally, decapping enzyme for NAD-capped RNAs: specifically hydrolyzes the nicotinamide adenine dinucleotide (NAD) cap from a subset of RNAs by removing the entire NAD moiety from the 5'-end of an NAD-capped RNA. The NAD-cap is present at the 5'-end of some RNAs and snoRNAs. In contrast to the canonical 5'-end N7 methylguanosine (m7G) cap, the NAD cap promotes mRNA decay. Also acts as a non-canonical decapping enzyme that removes the entire cap structure of m7G capped or incompletely capped RNAs and mediates their subsequent degradation. Specifically degrades pre-mRNAs with a defective m7G cap and is part of a pre-mRNA capping quality control. Has decapping activity toward incomplete 5'-end m7G cap mRNAs such as unmethylated 5'-end-capped RNA (cap0), while it has no activity toward 2'-O-ribose methylated m7G cap (cap1). Also possesses RNA 5'-pyrophosphohydrolase activity by hydrolyzing the 5'-end triphosphate to release pyrophosphates. Stimulates exoribonuclease activity of dhp1, allowing it to degrade RNAs with stable secondary structure more effectively. This is Decapping nuclease din1 from Schizosaccharomyces pombe (strain 972 / ATCC 24843) (Fission yeast).